We begin with the raw amino-acid sequence, 124 residues long: Small ribosomal subunit protein uS12 (124 aa).

Positions methionine 1 to alanine 26 are disordered. A 3-methylthioaspartic acid modification is found at aspartate 89. The segment at threonine 104–aspartate 124 is disordered.

Belongs to the universal ribosomal protein uS12 family. In terms of assembly, part of the 30S ribosomal subunit. Contacts proteins S8 and S17. May interact with IF1 in the 30S initiation complex.

In terms of biological role, with S4 and S5 plays an important role in translational accuracy. Functionally, interacts with and stabilizes bases of the 16S rRNA that are involved in tRNA selection in the A site and with the mRNA backbone. Located at the interface of the 30S and 50S subunits, it traverses the body of the 30S subunit contacting proteins on the other side and probably holding the rRNA structure together. The combined cluster of proteins S8, S12 and S17 appears to hold together the shoulder and platform of the 30S subunit. This is Small ribosomal subunit protein uS12 from Prochlorococcus marinus (strain MIT 9215).